The primary structure comprises 165 residues: Destrin (165 aa).

A2 carries the post-translational modification N-acetylalanine. S3 is modified (phosphoserine). Residues 4–153 (GVQVADEVCR…NRACIAEKLG (150 aa)) enclose the ADF-H domain. K19 carries the N6-acetyllysine modification. The Nuclear localization signal motif lies at 30 to 34 (KKRKK).

Belongs to the actin-binding proteins ADF family. ISGylated.

Functionally, actin-depolymerizing protein. Severs actin filaments (F-actin) and binds to actin monomers (G-actin). Acts in a pH-independent manner. The chain is Destrin (DSTN) from Bos taurus (Bovine).